An 865-amino-acid polypeptide reads, in one-letter code: DNA topoisomerase 1 (865 aa).

The Toprim domain occupies 3 to 142 (KALVIVESPA…RYSRVVFNEI (140 aa)). Glu-9 is a binding site for Mg(2+). Residues 37-65 (LPTSGSAAKKSADSTSTKTAKKPKKDERG) form a disordered region. Residues 39 to 54 (TSGSAAKKSADSTSTK) show a composition bias toward low complexity. Asp-111 serves as a coordination point for Mg(2+). Residues 158 to 575 (NINRVNAQQA…NFFSDFTQQL (418 aa)) form the Topo IA-type catalytic domain. Residues 192–197 (SAGRVQ) are interaction with DNA. Tyr-319 acts as the O-(5'-phospho-DNA)-tyrosine intermediate in catalysis. 3 C4-type zinc fingers span residues 599-630 (CPTC…KERC), 662-689 (CQKC…NPTC), and 711-736 (CEKC…NDEC).

The protein belongs to the type IA topoisomerase family. As to quaternary structure, monomer. It depends on Mg(2+) as a cofactor.

The catalysed reaction is ATP-independent breakage of single-stranded DNA, followed by passage and rejoining.. In terms of biological role, releases the supercoiling and torsional tension of DNA, which is introduced during the DNA replication and transcription, by transiently cleaving and rejoining one strand of the DNA duplex. Introduces a single-strand break via transesterification at a target site in duplex DNA. The scissile phosphodiester is attacked by the catalytic tyrosine of the enzyme, resulting in the formation of a DNA-(5'-phosphotyrosyl)-enzyme intermediate and the expulsion of a 3'-OH DNA strand. The free DNA strand then undergoes passage around the unbroken strand, thus removing DNA supercoils. Finally, in the religation step, the DNA 3'-OH attacks the covalent intermediate to expel the active-site tyrosine and restore the DNA phosphodiester backbone. This is DNA topoisomerase 1 from Salmonella typhimurium (strain LT2 / SGSC1412 / ATCC 700720).